Here is a 380-residue protein sequence, read N- to C-terminus: Large ribosomal subunit protein mL38 (380 aa).

A mitochondrion-targeting transit peptide spans 1-26 (MAAPWWRVVLNGSRNWRGFSTSAALS). Positions 101–122 (QQLLERKRVLRELRTSVEEERA) form a coiled coil.

This sequence belongs to the phosphatidylethanolamine-binding protein family. Mitochondrion-specific ribosomal protein mL38 subfamily. Component of the mitochondrial ribosome large subunit (39S) which comprises a 16S rRNA and about 50 distinct proteins.

It is found in the mitochondrion. This is Large ribosomal subunit protein mL38 (MRPL38) from Bos taurus (Bovine).